Reading from the N-terminus, the 510-residue chain is DNA-directed RNA polymerase I subunit RPA34 (510 aa).

Residue Met1 is modified to N-acetylmethionine. Positions 1–31 (MEEPQAGDAARFSCPPNFTAKPPASESPRFS) are disordered. Residue Ser27 is modified to Phosphoserine. Tyr80 is subject to Phosphotyrosine. A disordered region spans residues 120–143 (GPQQSLSGSPLQPIPASPPPQIPP). Residues Ser128, Ser136, Ser172, and Ser205 each carry the phosphoserine modification. The span at 131 to 143 (QPIPASPPPQIPP) shows a compositional bias: pro residues. Residues 203–510 (LGSPEMDVRK…KRKQQQQQPV (308 aa)) are disordered. A compositionally biased stretch (basic and acidic residues) spans 258-270 (GKETFEPEDKTVK). Residue Lys270 forms a Glycyl lysine isopeptide (Lys-Gly) (interchain with G-Cter in SUMO1); alternate linkage. Lys270 participates in a covalent cross-link: Glycyl lysine isopeptide (Lys-Gly) (interchain with G-Cter in SUMO2); alternate. Ser285 bears the Phosphoserine mark. Thr287 carries the phosphothreonine modification. Ser309 carries the post-translational modification Phosphoserine. Lys314 participates in a covalent cross-link: Glycyl lysine isopeptide (Lys-Gly) (interchain with G-Cter in SUMO1); alternate. Lys314 participates in a covalent cross-link: Glycyl lysine isopeptide (Lys-Gly) (interchain with G-Cter in SUMO2); alternate. Low complexity-rich tracts occupy residues 372 to 382 (AKPQAQAALAA) and 394 to 407 (DATV…VGPE). Positions 421-430 (TKKKKKKKER) are enriched in basic residues. Residues 436 to 452 (EPIQPLEPELPGEGQPE) are compositionally biased toward low complexity. Ser490 carries the post-translational modification Phosphoserine.

The protein belongs to the eukaryotic RPA34 RNA polymerase subunit family. Component of the RNA polymerase I (Pol I) complex consisting of 13 subunits: a ten-subunit catalytic core composed of POLR1A/RPA1, POLR1B/RPA2, POLR1C/RPAC1, POLR1D/RPAC2, POLR1H/RPA12, POLR2E/RPABC1, POLR2F/RPABC2, POLR2H/RPABC3, POLR2K/RPABC4 and POLR2L/RPABC5; a mobile stalk subunit POLR1F/RPA43 protruding from the core and additional subunits homologous to general transcription factors POLR1E/RPA49 and POLR1G/RPA34. Forms a heterodimer with POLR1E/RPA49. Part of Pol I pre-initiation complex (PIC), in which Pol I core assembles with RRN3 and promoter-bound UTBF and SL1/TIF-IB complex. Interacts with TAF1A thereby associates with the SL1/TIF-IB complex. Interacts with UBTF. Interacts with POLR1E/PRAF1 through its N-terminal region. As to quaternary structure, interacts with CD3E. In terms of processing, undergoes tyrosine phosphorylation upon T-cell receptor (TCR) stimulation. This phosphorylation has not been confirmed by other groups. Post-translationally, phosphorylated on tyrosine residues in initiation-competent Pol I-beta complexes but not in Pol I-alpha complexes.

The protein resides in the nucleus. It localises to the nucleolus. The protein localises to the chromosome. Its function is as follows. Component of RNA polymerase I (Pol I), a DNA-dependent RNA polymerase which synthesizes ribosomal RNA precursors using the four ribonucleoside triphosphates as substrates. Involved in UBTF-activated transcription, presumably at a step following PIC formation. Has been described as a component of preformed T-cell receptor (TCR) complex. This Homo sapiens (Human) protein is DNA-directed RNA polymerase I subunit RPA34.